The sequence spans 149 residues: Large ribosomal subunit protein bL9 (149 aa).

The protein belongs to the bacterial ribosomal protein bL9 family.

In terms of biological role, binds to the 23S rRNA. This chain is Large ribosomal subunit protein bL9, found in Enterobacter sp. (strain 638).